We begin with the raw amino-acid sequence, 270 residues long: NAD kinase (270 aa).

The active-site Proton acceptor is the Asp-49. NAD(+) is bound by residues 49-50 (DG), Arg-54, 126-127 (NE), Arg-152, Asp-154, 165-170 (TAYNKS), Ala-189, and Gln-227.

This sequence belongs to the NAD kinase family. It depends on a divalent metal cation as a cofactor.

The protein resides in the cytoplasm. The enzyme catalyses NAD(+) + ATP = ADP + NADP(+) + H(+). Its function is as follows. Involved in the regulation of the intracellular balance of NAD and NADP, and is a key enzyme in the biosynthesis of NADP. Catalyzes specifically the phosphorylation on 2'-hydroxyl of the adenosine moiety of NAD to yield NADP. The chain is NAD kinase from Lactococcus lactis subsp. cremoris (strain MG1363).